A 259-amino-acid polypeptide reads, in one-letter code: DNA-directed RNA polymerase 30 kDa polypeptide (259 aa).

Residues 155–195 (YNTPCPNCKSRNTTPMMIQTRAADEPPLVRHACRDCKQHFK) form a TFIIS-type zinc finger. 4 residues coordinate Zn(2+): Cys159, Cys162, Cys187, and Cys190. The segment at 214–259 (ENKEITEILPDNNPSPPESPEPASPIDDGLIRSTFDRNDEPPEDDE) is disordered. Pro residues predominate over residues 226-236 (NPSPPESPEPA).

It belongs to the poxviridae DNA-directed RNA polymerase 30 kDa subunit family. In terms of assembly, the DNA-dependent RNA polymerase (vRNAP) consists of eight subunits encoded by early viral genes and termed according to their apparent molecular masses Rpo147, Rpo132, Rpo35, Rpo30, Rpo22, Rpo19, Rpo18, and Rpo7. The same holoenzyme, with the addition of the transcription-specificity factor RAP94, is used for early gene expression.

The protein localises to the virion. It localises to the host cytoplasm. It carries out the reaction RNA(n) + a ribonucleoside 5'-triphosphate = RNA(n+1) + diphosphate. In terms of biological role, part of the DNA-dependent RNA polymerase which catalyzes the transcription of viral DNA into RNA using the four ribonucleoside triphosphates as substrates. Responsible for the transcription of early, intermediate and late genes. DNA-dependent RNA polymerase associates with the early transcription factor (ETF), itself composed of OPG118/D6 and OPG134/A8, thereby allowing the early genes transcription. Late transcription, and probably also intermediate transcription, require newly synthesized RNA polymerase. This is DNA-directed RNA polymerase 30 kDa polypeptide (OPG066) from Homo sapiens (Human).